Reading from the N-terminus, the 732-residue chain is E3 ubiquitin-protein ligase TRIM56 (732 aa).

The segment at 21–60 (CKICLEQLRVPKTLPCLHTYCQDCLAQLAEGSRLRCPECR) adopts an RING-type zinc-finger fold. The segment at 164–205 (RQAAQCPQHPGEALRFLCQPCSQLLCRECRLDPHLDHPCLPL) adopts a B box-type zinc-finger fold. 4 residues coordinate Zn(2+): cysteine 169, histidine 172, cysteine 192, and histidine 197. Positions 211–286 (ARRPGLEELL…LRAHVEAAEE (76 aa)) form a coiled coil. Positions 374–384 (LPQKDSGKDGA) are enriched in basic and acidic residues. The tract at residues 374–462 (LPQKDSGKDG…PAPGPNLEGS (89 aa)) is disordered. The segment covering 389–405 (GDATQPQSRDGVQTPNQ) has biased composition (polar residues). Threonine 402 is subject to Phosphothreonine. Basic and acidic residues predominate over residues 407-416 (DGAKTPKESR). A Phosphothreonine modification is found at threonine 419. Basic residues predominate over residues 434-446 (SNKKRKFKGRLKS). Serine 452 is subject to Phosphoserine.

This sequence belongs to the TRIM/RBCC family. In terms of assembly, interacts with STING1. Interacts with TICAM1.

Its subcellular location is the cytoplasm. The catalysed reaction is S-ubiquitinyl-[E2 ubiquitin-conjugating enzyme]-L-cysteine + [acceptor protein]-L-lysine = [E2 ubiquitin-conjugating enzyme]-L-cysteine + N(6)-ubiquitinyl-[acceptor protein]-L-lysine.. The protein operates within protein modification; protein ubiquitination. Functionally, E3 ubiquitin-protein ligase that plays a key role in innate antiviral immunity by mediating ubiquitination of CGAS and STING1. In response to pathogen- and host-derived double-stranded DNA (dsDNA), targets STING1 to 'Lys-63'-linked ubiquitination, thereby promoting its homodimerization, a step required for the production of type I interferon IFN-beta. Also mediate monoubiquitination of CGAS, thereby promoting CGAS oligomerization and subsequent activation. Independently of its E3 ubiquitin ligase activity, positive regulator of TLR3 signaling. Potentiates extracellular double stranded RNA (dsRNA)-induced expression of IFNB1 and interferon-stimulated genes ISG15, IFIT1/ISG56, CXCL10, OASL and CCL5/RANTES. Restricts bovine viral diarrhea virus (BVDV) replication. The protein is E3 ubiquitin-protein ligase TRIM56 of Bos taurus (Bovine).